A 428-amino-acid chain; its full sequence is Enolase (428 aa).

Residue Gln-173 participates in (2R)-2-phosphoglycerate binding. Glu-217 functions as the Proton donor in the catalytic mechanism. 3 residues coordinate Mg(2+): Asp-253, Glu-294, and Asp-320. (2R)-2-phosphoglycerate is bound by residues Lys-345, Arg-374, Ser-375, and Lys-396. The Proton acceptor role is filled by Lys-345.

Belongs to the enolase family. It depends on Mg(2+) as a cofactor.

The protein localises to the cytoplasm. The protein resides in the secreted. It is found in the cell surface. It catalyses the reaction (2R)-2-phosphoglycerate = phosphoenolpyruvate + H2O. Its pathway is carbohydrate degradation; glycolysis; pyruvate from D-glyceraldehyde 3-phosphate: step 4/5. Its function is as follows. Catalyzes the reversible conversion of 2-phosphoglycerate (2-PG) into phosphoenolpyruvate (PEP). It is essential for the degradation of carbohydrates via glycolysis. In Methanosarcina mazei (strain ATCC BAA-159 / DSM 3647 / Goe1 / Go1 / JCM 11833 / OCM 88) (Methanosarcina frisia), this protein is Enolase.